A 109-amino-acid chain; its full sequence is Hainantoxin-XVIII-2 (109 aa).

An N-terminal signal peptide occupies residues 1 to 18 (MKLSIIIIATSLVIAVVA). Residues 19–46 (FPSKDSKAIENDKTEQRMEIVVQETARA) constitute a propeptide that is removed on maturation. Intrachain disulfides connect Cys-47-Cys-62, Cys-59-Cys-108, and Cys-61-Cys-81.

It belongs to the neurotoxin 25 family. F7 subfamily. Expressed by the venom gland.

The protein localises to the secreted. Its function is as follows. Putative ion channel inhibitor. This Cyriopagopus hainanus (Chinese bird spider) protein is Hainantoxin-XVIII-2.